The sequence spans 525 residues: Peptide chain release factor 3 (525 aa).

The tr-type G domain occupies 9 to 276 (AKRRTFAIIS…GFTRYAPAPQ (268 aa)). GTP contacts are provided by residues 18-25 (SHPDAGKT), 86-90 (DTPGH), and 140-143 (NKFD).

It belongs to the TRAFAC class translation factor GTPase superfamily. Classic translation factor GTPase family. PrfC subfamily.

Its subcellular location is the cytoplasm. Increases the formation of ribosomal termination complexes and stimulates activities of RF-1 and RF-2. It binds guanine nucleotides and has strong preference for UGA stop codons. It may interact directly with the ribosome. The stimulation of RF-1 and RF-2 is significantly reduced by GTP and GDP, but not by GMP. The sequence is that of Peptide chain release factor 3 from Francisella tularensis subsp. holarctica (strain FTNF002-00 / FTA).